A 325-amino-acid chain; its full sequence is MYNVRTDLAVESREIYKHRYNREIDGVVFEEKTVEEDIKVTNVDILNEEGAKAMEKPIGRYVTIDIPDYTHYDGGIMDEVSHVVAASLEELINLPEERTALVVGLGNWNVTPDAIGPKVVGKLMVTRHLKKVMPDIIDDSVRPVCAIAPGVLGITGIETGEIIKSLVEKIKPDLVVCIDALASRKLERVARTIQISNTGISPGAGVGNHRMQINEESLGIPVIALGVPTVVDAATIANDAMDLVLDEMINQADAGKEFYNILNNIDKNEKGMMIKSLLDPYVGDLMVTPKEIDDIIESVSKIIANGINIALQPNMVLEDINKFLN.

Positions 1-7 (MYNVRTD) are excised as a propeptide.

The protein belongs to the peptidase A25 family. Homotetramer. In terms of processing, autoproteolytically processed. The inactive tetrameric zymogen termed p46 autoprocesses to a smaller form termed p41, which is active only during spore germination.

It carries out the reaction Endopeptidase action with P4 Glu or Asp, P1 preferably Glu &gt; Asp, P1' hydrophobic and P2' Ala.. Its function is as follows. Initiates the rapid degradation of small, acid-soluble proteins during spore germination. In Clostridium perfringens (strain SM101 / Type A), this protein is Germination protease.